Consider the following 205-residue polypeptide: Adenylyl-sulfate kinase (205 aa).

Residue glycine 31–serine 38 participates in ATP binding. The active-site Phosphoserine intermediate is the serine 105.

This sequence belongs to the APS kinase family.

It catalyses the reaction adenosine 5'-phosphosulfate + ATP = 3'-phosphoadenylyl sulfate + ADP + H(+). Its pathway is sulfur metabolism; hydrogen sulfide biosynthesis; sulfite from sulfate: step 2/3. Its function is as follows. Catalyzes the synthesis of activated sulfate. In Shewanella putrefaciens (strain CN-32 / ATCC BAA-453), this protein is Adenylyl-sulfate kinase.